The following is a 224-amino-acid chain: UPF0758 protein VF_0126 (224 aa).

The MPN domain occupies 102 to 224 (ALTSPEHTKR…IVSFAERGWI (123 aa)). Zn(2+) contacts are provided by His173, His175, and Asp186. The JAMM motif motif lies at 173–186 (HNHPSGVAEPSQAD).

The protein belongs to the UPF0758 family.

This chain is UPF0758 protein VF_0126, found in Aliivibrio fischeri (strain ATCC 700601 / ES114) (Vibrio fischeri).